Consider the following 137-residue polypeptide: Large ribosomal subunit protein uL16 (137 aa).

It belongs to the universal ribosomal protein uL16 family. Part of the 50S ribosomal subunit.

Its function is as follows. Binds 23S rRNA and is also seen to make contacts with the A and possibly P site tRNAs. The sequence is that of Large ribosomal subunit protein uL16 from Streptococcus uberis (strain ATCC BAA-854 / 0140J).